A 248-amino-acid polypeptide reads, in one-letter code: Neurotrophic factor BDNF precursor form (248 aa).

Positions 1–18 are cleaved as a signal peptide; it reads MTILFLTMVISYFSCMKA. The propeptide occupies 19–129; it reads APMKEANVRG…AANMSMRVRR (111 aa). N-linked (GlcNAc...) asparagine glycosylation is present at asparagine 122. 3 disulfide bridges follow: cysteine 142-cysteine 209, cysteine 187-cysteine 238, and cysteine 197-cysteine 240.

This sequence belongs to the NGF-beta family. Monomers and homodimers. Binds to NTRK2/TRKB. Can form heterodimers with other neurotrophin family members, such as NTF3 and NTF4 (in vitro), but the physiological relevance of this is not clear. BDNF precursor form: interacts with the heterodimer formed by NGFR and SORCS2. Mature BDNF has much lower affinity for the heterodimer formed by NGFR and SORCS2. In terms of processing, N-glycosylated and glycosulfated, contrary to mature BDNF. Mature BDNF is produced by proteolytic removal of the propeptide, catalyzed by a FURIN family member. In addition, the precursor form is proteolytically cleaved within the propeptide, but this is not an obligatory intermediate for the production of mature BDNF. Can be converted into mature BDNF by plasmin (PLG).

The protein localises to the secreted. Functionally, important signaling molecule that activates signaling cascades downstream of NTRK2. During development, promotes the survival and differentiation of selected neuronal populations of the peripheral and central nervous systems. Participates in axonal growth, pathfinding and in the modulation of dendritic growth and morphology. Major regulator of synaptic transmission and plasticity at adult synapses in many regions of the CNS. The versatility of BDNF is emphasized by its contribution to a range of adaptive neuronal responses including long-term potentiation (LTP), long-term depression (LTD), certain forms of short-term synaptic plasticity, as well as homeostatic regulation of intrinsic neuronal excitability. Important signaling molecule that activates signaling cascades downstream of NTRK2. Activates signaling cascades via the heterodimeric receptor formed by NGFR and SORCS2. Signaling via NGFR and SORCS2 plays a role in synaptic plasticity and long-term depression (LTD). Binding to NGFR and SORCS2 promotes neuronal apoptosis. Promotes neuronal growth cone collapse. The sequence is that of Neurotrophic factor BDNF precursor form (BDNF) from Lipotes vexillifer (Yangtze river dolphin).